Here is a 342-residue protein sequence, read N- to C-terminus: Methionine import ATP-binding protein MetN 3 (342 aa).

In terms of domain architecture, ABC transporter spans 2–241 (ISLKGISKTF…PKEQMTKEFV (240 aa)). 38–45 (GYSGAGKS) lines the ATP pocket.

This sequence belongs to the ABC transporter superfamily. Methionine importer (TC 3.A.1.24) family. As to quaternary structure, the complex is composed of two ATP-binding proteins (MetN), two transmembrane proteins (MetI) and a solute-binding protein (MetQ).

Its subcellular location is the cell membrane. It carries out the reaction L-methionine(out) + ATP + H2O = L-methionine(in) + ADP + phosphate + H(+). It catalyses the reaction D-methionine(out) + ATP + H2O = D-methionine(in) + ADP + phosphate + H(+). In terms of biological role, part of the ABC transporter complex MetNIQ involved in methionine import. Responsible for energy coupling to the transport system. In Shouchella clausii (strain KSM-K16) (Alkalihalobacillus clausii), this protein is Methionine import ATP-binding protein MetN 3.